The sequence spans 203 residues: Galactoside O-acetyltransferase (203 aa).

Substrate-binding residues include Asp-17, Ser-71, Asn-85, and Asp-93. Asn-85 serves as a coordination point for acetyl-CoA. His-115 acts as the Proton donor/acceptor in catalysis. Residues Ser-142, Ala-160, 165–166 (TK), Arg-180, and Arg-183 contribute to the acetyl-CoA site.

Belongs to the transferase hexapeptide repeat family. As to quaternary structure, homotrimer. The N-terminus of this protein is heterogeneous because the initiator methionine is only partially cleaved.

The protein resides in the cytoplasm. It carries out the reaction a beta-D-galactoside + acetyl-CoA = a 6-acetyl-beta-D-galactoside + CoA. Catalyzes the CoA-dependent transfer of an acetyl group to the 6-O-methyl position of a range of galactosides, glucosides, and lactosides. May assist cellular detoxification by acetylating non-metabolizable pyranosides, thereby preventing their reentry into the cell. This chain is Galactoside O-acetyltransferase (lacA), found in Escherichia coli (strain K12).